The primary structure comprises 391 residues: Ferrochelatase (391 aa).

Positions 196 and 281 each coordinate Fe cation.

The protein belongs to the ferrochelatase family.

The protein localises to the cytoplasm. It catalyses the reaction heme b + 2 H(+) = protoporphyrin IX + Fe(2+). It functions in the pathway porphyrin-containing compound metabolism; protoheme biosynthesis; protoheme from protoporphyrin-IX: step 1/1. In terms of biological role, catalyzes the ferrous insertion into protoporphyrin IX. This chain is Ferrochelatase, found in Prochlorococcus marinus (strain MIT 9301).